A 654-amino-acid chain; its full sequence is tRNA 5-methylaminomethyl-2-thiouridine biosynthesis bifunctional protein MnmC (654 aa).

Residues 1 to 235 (MSDFQHAQLD…KREMLGGTYQ (235 aa)) are tRNA (mnm(5)s(2)U34)-methyltransferase. The segment at 261–654 (VGGGLAGCAS…LRDLVRGQRG (394 aa)) is FAD-dependent cmnm(5)s(2)U34 oxidoreductase.

This sequence in the N-terminal section; belongs to the methyltransferase superfamily. tRNA (mnm(5)s(2)U34)-methyltransferase family. It in the C-terminal section; belongs to the DAO family. The cofactor is FAD.

The protein resides in the cytoplasm. The catalysed reaction is 5-aminomethyl-2-thiouridine(34) in tRNA + S-adenosyl-L-methionine = 5-methylaminomethyl-2-thiouridine(34) in tRNA + S-adenosyl-L-homocysteine + H(+). Functionally, catalyzes the last two steps in the biosynthesis of 5-methylaminomethyl-2-thiouridine (mnm(5)s(2)U) at the wobble position (U34) in tRNA. Catalyzes the FAD-dependent demodification of cmnm(5)s(2)U34 to nm(5)s(2)U34, followed by the transfer of a methyl group from S-adenosyl-L-methionine to nm(5)s(2)U34, to form mnm(5)s(2)U34. The polypeptide is tRNA 5-methylaminomethyl-2-thiouridine biosynthesis bifunctional protein MnmC (Pseudomonas aeruginosa (strain UCBPP-PA14)).